The sequence spans 61 residues: Photosystem II reaction center X protein (61 aa).

A helical membrane pass occupies residues 26–46; it reads IGSFIAAALLIVVPATAFLIF.

Belongs to the PsbX family. Type 2 subfamily. As to quaternary structure, PSII consists of a core antenna complex that captures photons, and an electron transfer chain that converts photonic excitation into a charge separation. PSII forms dimeric complexes.

Its subcellular location is the cellular thylakoid membrane. In terms of biological role, involved in the binding and/or turnover of quinones at the Q(B) site of Photosystem II. The chain is Photosystem II reaction center X protein from Prochlorococcus marinus (strain AS9601).